The chain runs to 311 residues: Olfactory receptor 14I1 (311 aa).

Residues 1-26 (MDNLTKVTEFLLMEFSGIWELQVLHA) lie on the Extracellular side of the membrane. An N-linked (GlcNAc...) asparagine glycan is attached at asparagine 3. The chain crosses the membrane as a helical span at residues 27 to 47 (GLFLLIYLAVLVGNLLIIAVI). The Cytoplasmic segment spans residues 48 to 55 (TLDQHLHT). The chain crosses the membrane as a helical span at residues 56–76 (PMYFFLKNLSVLDLCYISVTV). Topologically, residues 77 to 92 (PKSIRNSLTRRSSISY) are extracellular. A helical transmembrane segment spans residues 93 to 113 (LGCVAQVYFFSAFASAELAFL). Cysteine 95 and cysteine 188 are joined by a disulfide. The Cytoplasmic portion of the chain corresponds to 114-141 (TVMSYDRYVAICHPLQYRAVMTSGGCYQ). A helical membrane pass occupies residues 142–162 (MAVTTWLSCFSYAAVHTGNMF). Over 163-189 (REHVCRSSVIHQFFRDIPHVLALVSCE) the chain is Extracellular. The chain crosses the membrane as a helical span at residues 190-210 (VFFVEFLTLALSSCLVLGCFI). Residues 211 to 241 (LMMISYFQIFSTVLRIPSGQSRAKAFSTCSP) are Cytoplasmic-facing. A helical transmembrane segment spans residues 242–262 (QLIVIMLFLTTGLFAALGPIA). Residues 263-269 (KALSIQD) are Extracellular-facing. A helical membrane pass occupies residues 270–290 (LVIALTYTVLPPFLNPIIYSL). Over 291–311 (RNKEIKTAMWRLFVKIYFLQK) the chain is Cytoplasmic.

Belongs to the G-protein coupled receptor 1 family.

It is found in the cell membrane. Its function is as follows. Odorant receptor. This Homo sapiens (Human) protein is Olfactory receptor 14I1 (OR14I1).